Consider the following 554-residue polypeptide: Probable urocanate hydratase (554 aa).

NAD(+) contacts are provided by residues 49-50 (GG), Q127, E194, 240-241 (NA), 261-265 (QTAAH), 271-272 (YI), and Y320. C408 is a catalytic residue. G490 is a binding site for NAD(+).

It belongs to the urocanase family. NAD(+) is required as a cofactor.

The protein resides in the cytoplasm. It catalyses the reaction 4-imidazolone-5-propanoate = trans-urocanate + H2O. It functions in the pathway amino-acid degradation; L-histidine degradation into L-glutamate; N-formimidoyl-L-glutamate from L-histidine: step 2/3. Catalyzes the conversion of urocanate to 4-imidazolone-5-propionate. This Thermoplasma acidophilum (strain ATCC 25905 / DSM 1728 / JCM 9062 / NBRC 15155 / AMRC-C165) protein is Probable urocanate hydratase.